Reading from the N-terminus, the 206-residue chain is CASP-like protein 1F1 (206 aa).

Topologically, residues 1–43 (MCFQFSILYTCYLAHFGVFPRKYLVMAGIEAKFQQNPPLGTHK) are cytoplasmic. A helical membrane pass occupies residues 44–64 (LFLGAHICLRILTVTATLTAA). Topologically, residues 65–92 (WMMITSKQTVEVYGIQVEAKYSYSSAFK) are extracellular. A helical membrane pass occupies residues 93–113 (FFSYANAIACGCSVLTLFPAF). Residues 114–124 (SLFYRGSTPMK) lie on the Cytoplasmic side of the membrane. A helical transmembrane segment spans residues 125–145 (FFFLFLHDLCMMSLVLAGCAA). Residues 146 to 177 (ATAIGYVGRYGNNHAGWMAICDQFDEYCNRIR) lie on the Extracellular side of the membrane. Residues 178-198 (LSLMFSYLAFVFILMLTIMSA) form a helical membrane-spanning segment. Topologically, residues 199–206 (NKSREIRV) are cytoplasmic.

This sequence belongs to the Casparian strip membrane proteins (CASP) family. In terms of assembly, homodimer and heterodimers.

Its subcellular location is the cell membrane. The polypeptide is CASP-like protein 1F1 (Vitis vinifera (Grape)).